Here is a 1088-residue protein sequence, read N- to C-terminus: Insulin receptor substrate 1-B (1088 aa).

One can recognise a PH domain in the interval 15-117 (DVRKVGYLRK…WYQALVDLHN (103 aa)). Residue Tyr48 is modified to Phosphotyrosine. Residues 155–259 (FKEVWQVIMK…EAMKALSDEF (105 aa)) enclose the IRS-type PTB domain. The tract at residues 259–428 (FRPRSKSQSS…GGFISSDEYG (170 aa)) is disordered. Low complexity-rich tracts occupy residues 264 to 278 (KSQS…ISVP), 302 to 312 (SATATSPAGGA), 379 to 400 (SPSA…GSTS), and 408 to 420 (SSAS…SDGG). Ser307 is subject to Phosphoserine. Residue Tyr460 is modified to Phosphotyrosine; by INSR. The YXXM motif 1 signature appears at 460–463 (YICM). Polar residues-rich tracts occupy residues 466–479 (SSSH…QRYQ) and 499–516 (SSGT…PSQS). Disordered regions lie at residues 466–485 (SSSH…RGEE) and 496–516 (RTHS…PSQS). 5 short sequence motifs (YXXM motif) span residues 521–524 (YTEM), 567–570 (YMPM), 584–587 (YMPM), 612–615 (YMMM), and 654–657 (YINM). 2 positions are modified to phosphotyrosine; by INSR: Tyr567 and Tyr584. Position 612 is a phosphotyrosine (Tyr612). Positions 704-785 (NLRISANSGH…PPEPKSPGEY (82 aa)) are disordered. Positions 707 to 718 (ISANSGHNLYTE) are enriched in polar residues. The span at 719 to 729 (DSSSSSTSSDS) shows a compositional bias: low complexity. Phosphotyrosine; by INSR occurs at positions 785 and 823. Positions 785-787 (YVN) are GRB2-binding. A YXXM motif 7 motif is present at residues 823-826 (YMNM). The span at 840–863 (TSSYEPPNKPVNSVCPTETCSSSR) shows a compositional bias: polar residues. The interval 840–868 (TSSYEPPNKPVNSVCPTETCSSSRPPIRG) is disordered. Tyr875 carries the phosphotyrosine; by INSR modification. Short sequence motifs (YXXM motif) lie at residues 875–878 (YMSM) and 909–912 (YAEM). A disordered region spans residues 935 to 1006 (ASRSSLLGQG…SGEDVKRHSS (72 aa)). Composition is skewed to polar residues over residues 946-961 (GPSA…NRNP) and 980-995 (ETFS…TTGP). Residues Tyr1037 and Tyr1069 each carry the phosphotyrosine; by INSR modification.

Interacts with the NPXY motif of tyrosine-phosphorylated igf1r and insr via the PTB domain. Binds to phosphatidylinositol 3-kinase p85 subunit at a low level in vitro prior to phosphorylation. Binding is greatly enhanced following tyrosine phosphorylation by insr and probably occurs via the phosphorylated YXXM motifs. Phosphorylation of Tyr-785 is required for grb2-binding.

In terms of biological role, may mediate the control of various cellular processes by insulin. When phosphorylated by the insulin receptor binds specifically to various cellular proteins containing SH2 domains such as phosphatidylinositol 3-kinase p85 subunit or grb2. Activates phosphatidylinositol 3-kinase when bound to the regulatory p85 subunit. In Xenopus laevis (African clawed frog), this protein is Insulin receptor substrate 1-B (irs1-b).